Consider the following 356-residue polypeptide: Thymidine kinase (356 aa).

The disordered stretch occupies residues 1-29 (MMDSRATYVPPKKISESNSNAEEDPTDCS). Position 61–68 (61–68 (GCVGVGKT)) interacts with ATP. Catalysis depends on E86, which acts as the Proton acceptor. Substrate is bound at residue Q122. R208 provides a ligand contact to ATP. R214 is a binding site for substrate.

Belongs to the herpesviridae thymidine kinase family. Homodimer.

It carries out the reaction thymidine + ATP = dTMP + ADP + H(+). Catalyzes the transfer of the gamma-phospho group of ATP to thymidine to generate dTMP in the salvage pathway of pyrimidine synthesis. The dTMP serves as a substrate for DNA polymerase during viral DNA replication. Allows the virus to be reactivated and to grow in non-proliferative cells lacking a high concentration of phosphorylated nucleic acid precursors. The protein is Thymidine kinase of Elephas maximus (Indian elephant).